Reading from the N-terminus, the 285-residue chain is Bifunctional protein FolD (285 aa).

NADP(+)-binding positions include 165 to 167 and Ser-190; that span reads GRS.

It belongs to the tetrahydrofolate dehydrogenase/cyclohydrolase family. Homodimer.

It catalyses the reaction (6R)-5,10-methylene-5,6,7,8-tetrahydrofolate + NADP(+) = (6R)-5,10-methenyltetrahydrofolate + NADPH. The catalysed reaction is (6R)-5,10-methenyltetrahydrofolate + H2O = (6R)-10-formyltetrahydrofolate + H(+). It functions in the pathway one-carbon metabolism; tetrahydrofolate interconversion. Its function is as follows. Catalyzes the oxidation of 5,10-methylenetetrahydrofolate to 5,10-methenyltetrahydrofolate and then the hydrolysis of 5,10-methenyltetrahydrofolate to 10-formyltetrahydrofolate. The chain is Bifunctional protein FolD from Burkholderia ambifaria (strain ATCC BAA-244 / DSM 16087 / CCUG 44356 / LMG 19182 / AMMD) (Burkholderia cepacia (strain AMMD)).